The primary structure comprises 527 residues: Neutrophil cytosol factor 2 (527 aa).

TPR repeat units follow at residues 37-70, 71-104, and 121-154; these read SRIC…DKHL, AVSY…LRGN, and CEVL…KSEP. Threonine 233 is subject to Phosphothreonine. The 60-residue stretch at 240 to 299 folds into the SH3 1 domain; the sequence is LEGEAHRVLFGFVPETPEELQVMPGNIVFVLKKGNDNWATVMFNGQKGLVPCNYLEPVEL. Residues 304–345 form a disordered region; it reads QQQPQEETSLESDIPAPPSSSAPGRPQLSPGQKGKEEPKQEI. Residue serine 324 is modified to Phosphoserine. A compositionally biased stretch (basic and acidic residues) spans 336–345; it reads KGKEEPKQEI. The region spanning 352-430 is the PB1 domain; that stretch reads SYTLKVHYKY…YCLTLWCENT (79 aa). At serine 400 the chain carries Phosphoserine. A disordered region spans residues 434–457; sequence QGFPDEPEESKKSDANNQTTEPEL. In terms of domain architecture, SH3 2 spans 458 to 517; sequence KEGSKVVALFSYEATQPEDLEFLEGDVILVISTVNEQWLEGECKGKVGIFPKAFVEQHPT.

The protein belongs to the NCF2/NOXA1 family. In terms of assembly, component of the phagocyte NADPH oxidase complex composed of an obligatory core heterodimer formed by the membrane proteins CYBA and CYBB and the cytosolic regulatory subunits NCF1/p47-phox, NCF2/p67-phox, NCF4/p40-phox and the small GTPase RAC1 or RAC2. Part of a cytosolic complex composed at least by NCF1, NCF2 and NCF4. Interacts with NCF4. Interacts (via the C-terminal SH3 domain) with NCF1 (via C-terminus). Interacts with SYTL1 and RAC1. May interact with NOXO1. Interacts with S100A8 and calprotectin (S100A8/9). Interacts with GBP7 (via GB1/RHD3-type G domain). Interacts with CYBB; the interaction is enhanced in the presence of GBP7.

Its subcellular location is the cytoplasm. Its function is as follows. Subunit of the phagocyte NADPH oxidase complex that mediates the transfer of electrons from cytosolic NADPH to O2 to produce the superoxide anion (O2(-)). In the activated complex, electrons are first transferred from NADPH to flavin adenine dinucleotide (FAD) and subsequently transferred via two heme molecules to molecular oxygen, producing superoxide through an outer-sphere reaction. Activation of the NADPH oxidase complex is initiated by the assembly of cytosolic subunits of the NADPH oxidase complex with the core NADPH oxidase complex to form a complex at the plasma membrane or phagosomal membrane. This activation process is initiated by phosphorylation dependent binding of the cytosolic NCF1/p47-phox subunit to the C-terminus of CYBA/p22-phox. The sequence is that of Neutrophil cytosol factor 2 from Bos taurus (Bovine).